The chain runs to 311 residues: ATP synthase gamma chain (311 aa).

Cys67 and Cys138 form a disulfide bridge.

Belongs to the ATPase gamma chain family. In terms of assembly, F-type ATPases have 2 components, CF(1) - the catalytic core - and CF(0) - the membrane proton channel. CF(1) has five subunits: alpha(3), beta(3), gamma(1), delta(1), epsilon(1). CF(0) has three main subunits: a, b and c.

It is found in the cellular thylakoid membrane. Thiol-modulation by raising the activation threshold of the enzyme upon oxidation of the cysteines, thereby preventing wasteful ATP-hydrolysis. Its function is as follows. Produces ATP from ADP in the presence of a proton gradient across the membrane. The gamma chain is believed to be important in regulating ATPase activity and the flow of protons through the CF(0) complex. This Arthrospira platensis (Spirulina platensis) protein is ATP synthase gamma chain (atpG).